Consider the following 312-residue polypeptide: tRNA-cytidine(32) 2-sulfurtransferase (312 aa).

Residues 39-44 carry the PP-loop motif motif; it reads SGGKDS. Positions 114, 117, and 205 each coordinate [4Fe-4S] cluster.

It belongs to the TtcA family. In terms of assembly, homodimer. Requires Mg(2+) as cofactor. [4Fe-4S] cluster is required as a cofactor.

It is found in the cytoplasm. The enzyme catalyses cytidine(32) in tRNA + S-sulfanyl-L-cysteinyl-[cysteine desulfurase] + AH2 + ATP = 2-thiocytidine(32) in tRNA + L-cysteinyl-[cysteine desulfurase] + A + AMP + diphosphate + H(+). It functions in the pathway tRNA modification. Catalyzes the ATP-dependent 2-thiolation of cytidine in position 32 of tRNA, to form 2-thiocytidine (s(2)C32). The sulfur atoms are provided by the cysteine/cysteine desulfurase (IscS) system. The chain is tRNA-cytidine(32) 2-sulfurtransferase from Cupriavidus pinatubonensis (strain JMP 134 / LMG 1197) (Cupriavidus necator (strain JMP 134)).